Consider the following 505-residue polypeptide: GMP synthase [glutamine-hydrolyzing] (505 aa).

Positions Ser-2–Asp-190 constitute a Glutamine amidotransferase type-1 domain. Cys-79 (nucleophile) is an active-site residue. Active-site residues include His-165 and Glu-167. The region spanning Trp-191–Arg-380 is the GMPS ATP-PPase domain. Residue Ser-218–Ser-224 participates in ATP binding.

Homodimer.

It carries out the reaction XMP + L-glutamine + ATP + H2O = GMP + L-glutamate + AMP + diphosphate + 2 H(+). Its pathway is purine metabolism; GMP biosynthesis; GMP from XMP (L-Gln route): step 1/1. Functionally, catalyzes the synthesis of GMP from XMP. In Deinococcus geothermalis (strain DSM 11300 / CIP 105573 / AG-3a), this protein is GMP synthase [glutamine-hydrolyzing].